We begin with the raw amino-acid sequence, 105 residues long: Small ribosomal subunit protein uS10c (105 aa).

Belongs to the universal ribosomal protein uS10 family. As to quaternary structure, part of the 30S ribosomal subunit.

It is found in the plastid. The protein resides in the cyanelle. Functionally, involved in the binding of tRNA to the ribosomes. This chain is Small ribosomal subunit protein uS10c (rps10), found in Cyanophora paradoxa.